A 231-amino-acid chain; its full sequence is Tegument protein UL51 homolog (231 aa).

C12 is lipidated: S-palmitoyl cysteine; by host.

This sequence belongs to the herpesviridae UL51 family. In terms of assembly, oligomerizes. Interacts with U75; this interaction mediates U75 incorporation to virions. Phosphorylated. Post-translationally, palmitoylation is necessary for Golgi localization.

The protein resides in the virion tegument. Its subcellular location is the host cytoplasm. It localises to the host Golgi apparatus. Its function is as follows. Plays several roles during the time course of infection, including egress of virus particles from the perinuclear space and secondary envelopment of cytoplasmic capsids that bud into specific trans-Golgi network (TGN)-derived membranes. The chain is Tegument protein UL51 homolog (U44) from Human herpesvirus 6B (strain Z29) (HHV-6 variant B).